Here is a 316-residue protein sequence, read N- to C-terminus: tRNA dimethylallyltransferase (316 aa).

17–24 serves as a coordination point for ATP; the sequence is GPTASGKT. 19–24 is a binding site for substrate; that stretch reads TASGKT. Interaction with substrate tRNA stretches follow at residues 42-45, 166-170, 247-252, and 280-287; these read DSAL, QRLSR, RCVGYR, and KRQITWLR.

The protein belongs to the IPP transferase family. As to quaternary structure, monomer. Requires Mg(2+) as cofactor.

It catalyses the reaction adenosine(37) in tRNA + dimethylallyl diphosphate = N(6)-dimethylallyladenosine(37) in tRNA + diphosphate. Functionally, catalyzes the transfer of a dimethylallyl group onto the adenine at position 37 in tRNAs that read codons beginning with uridine, leading to the formation of N6-(dimethylallyl)adenosine (i(6)A). The protein is tRNA dimethylallyltransferase of Escherichia coli O45:K1 (strain S88 / ExPEC).